A 172-amino-acid polypeptide reads, in one-letter code: Mitochondrial import inner membrane translocase subunit Tim17-B (172 aa).

The cysteines at positions 9 and 78 are disulfide-linked. Helical transmembrane passes span 17–37 (CGGAFTMGVIGGGVFQAIKGF), 61–77 (QIGGSFAVWGGLFSTID), and 113–133 (VGSAMMGGILLALIEGVGILL). Residues 147–172 (FLEDPSQLTPKEGSPAPGYPNYQQYH) are disordered.

Belongs to the Tim17/Tim22/Tim23 family. As to quaternary structure, component of the TIM23 complex at least composed of TIMM23, TIMM17 (TIMM17A or TIMM17B) and TIMM50. The complex interacts with the TIMM44 component of the PAM complex. The complex also interacts with DNAJC15.

The protein localises to the mitochondrion inner membrane. In terms of biological role, essential component of the TIM23 complex, a complex that mediates the translocation of transit peptide-containing proteins across the mitochondrial inner membrane. This Mus musculus (Mouse) protein is Mitochondrial import inner membrane translocase subunit Tim17-B (Timm17b).